The sequence spans 306 residues: Ribonuclease Z (306 aa).

7 residues coordinate Zn(2+): His63, His65, Asp67, His68, His141, Asp211, and His269. Asp67 acts as the Proton acceptor in catalysis.

This sequence belongs to the RNase Z family. As to quaternary structure, homodimer. Zn(2+) is required as a cofactor.

The catalysed reaction is Endonucleolytic cleavage of RNA, removing extra 3' nucleotides from tRNA precursor, generating 3' termini of tRNAs. A 3'-hydroxy group is left at the tRNA terminus and a 5'-phosphoryl group is left at the trailer molecule.. In terms of biological role, zinc phosphodiesterase, which displays some tRNA 3'-processing endonuclease activity. Probably involved in tRNA maturation, by removing a 3'-trailer from precursor tRNA. The polypeptide is Ribonuclease Z (Staphylococcus aureus (strain Mu3 / ATCC 700698)).